A 799-amino-acid polypeptide reads, in one-letter code: Cadherin-8 (799 aa).

A signal peptide spans 1–29 (MPERLAETLLDLWTPLIILWITLPSFVYM). Positions 30–61 (APMNQAHVLTTGSPLELSRQSEEMRILNRSKR) are excised as a propeptide. Cadherin domains are found at residues 62 to 167 (GWVW…APEF), 168 to 276 (LNGP…PPKF), 277 to 391 (AQSL…PPVF), 392 to 494 (SSPT…DNAP), and 495 to 616 (EFAS…YVLP). Topologically, residues 62–621 (GWVWNQMFVL…PYVLPIGLSM (560 aa)) are extracellular. Asparagine 188 carries N-linked (GlcNAc...) asparagine glycosylation. N-linked (GlcNAc...) asparagine glycans are attached at residues asparagine 463, asparagine 473, and asparagine 544. A helical transmembrane segment spans residues 622-642 (GALIAILACIILLLVIVVLFV). Residues 643–799 (TLRRHKNEPL…YSVGESDKET (157 aa)) lie on the Cytoplasmic side of the membrane. Serine 795 carries the phosphoserine modification.

The protein localises to the cell membrane. Its function is as follows. Cadherins are calcium-dependent cell adhesion proteins. They preferentially interact with themselves in a homophilic manner in connecting cells; cadherins may thus contribute to the sorting of heterogeneous cell types. The sequence is that of Cadherin-8 (Cdh8) from Rattus norvegicus (Rat).